A 230-amino-acid chain; its full sequence is Orotidine 5'-phosphate decarboxylase (230 aa).

Substrate is bound by residues D10, K31, 58 to 67 (DLKLHDIPNT), T117, R179, Q188, G208, and R209. Catalysis depends on K60, which acts as the Proton donor.

The protein belongs to the OMP decarboxylase family. Type 1 subfamily. In terms of assembly, homodimer.

It carries out the reaction orotidine 5'-phosphate + H(+) = UMP + CO2. The protein operates within pyrimidine metabolism; UMP biosynthesis via de novo pathway; UMP from orotate: step 2/2. In terms of biological role, catalyzes the decarboxylation of orotidine 5'-monophosphate (OMP) to uridine 5'-monophosphate (UMP). This Staphylococcus epidermidis (strain ATCC 12228 / FDA PCI 1200) protein is Orotidine 5'-phosphate decarboxylase.